We begin with the raw amino-acid sequence, 533 residues long: Fimbrial subunit type 1 (533 aa).

The first 30 residues, 1–30, serve as a signal peptide directing secretion; it reads MHSLNTRRGLGLAAAMTLAAGALVAPTGAA. An LPXTG sorting signal motif is present at residues 496–500; the sequence is LPLTG. A Pentaglycyl murein peptidoglycan amidated threonine modification is found at Thr-499. Residues 500 to 533 constitute a propeptide, removed by sortase; the sequence is GANGVIFLTIAGALLVAGGAVVAYANKRRHVAKH.

It localises to the secreted. Its subcellular location is the cell wall. The protein resides in the fimbrium. In terms of biological role, major fimbrial subunit of A.viscosus. The chain is Fimbrial subunit type 1 from Actinomyces viscosus.